Consider the following 204-residue polypeptide: N-(5'-phosphoribosyl)anthranilate isomerase (204 aa).

It belongs to the TrpF family.

The enzyme catalyses N-(5-phospho-beta-D-ribosyl)anthranilate = 1-(2-carboxyphenylamino)-1-deoxy-D-ribulose 5-phosphate. Its pathway is amino-acid biosynthesis; L-tryptophan biosynthesis; L-tryptophan from chorismate: step 3/5. In Bacillus cereus (strain AH820), this protein is N-(5'-phosphoribosyl)anthranilate isomerase.